Reading from the N-terminus, the 85-residue chain is Protein C4 (85 aa).

Glycine 2 carries the N-myristoyl glycine; by host lipid modification. The segment at leucine 42–arginine 65 is disordered. Positions proline 44–threonine 57 are enriched in low complexity.

Belongs to the geminiviridae protein AC4/C4 family. In terms of assembly, interacts with Arabidopsis thaliana RCH2, ASK7/ASK-eta and ASK6/ASK-zeta. Phosphorylated by Arabidopsis thaliana ASK7/ASK-eta mainly on threonine and serine residues. As to expression, expressed in vascular tissues, and especially in phloem cells.

The protein resides in the host cell membrane. Its function is as follows. Major determinant of pathogenesis that affects the hyperplastic response of the host to viral infection. Mediates the induction of cell division in permissive cells, mainly in phloem. May act as a suppressor of RNA-mediated gene silencing, also known as post-transcriptional gene silencing (PTGS), a mechanism of plant viral defense that limits the accumulation of viral RNAs. The polypeptide is Protein C4 (Beet curly top virus (strain California/Logan) (BCTV)).